We begin with the raw amino-acid sequence, 840 residues long: Microcephalin (840 aa).

One can recognise a BRCT 1 domain in the interval 1–93; that stretch reads MAAHILKDVV…AHIDESLFPA (93 aa). Residues 184 to 206 are disordered; it reads KEKRENLSPSSSQMIQQSHDNPS. The segment covering 190-206 has biased composition (polar residues); it reads LSPSSSQMIQQSHDNPS. Residues S279, S287, S296, and S333 each carry the phosphoserine modification. Disordered regions lie at residues 313–379 and 418–437; these read PDQK…SIRR and PDNL…QLPS. Residue T335 is modified to Phosphothreonine. Over residues 355–378 the composition is skewed to basic residues; sequence KRQRVSHGSHSPSKGKSKRKRSIR. The segment covering 427–437 has biased composition (polar residues); it reads ENLPPTSQLPS. Position 552 is a phosphoserine (S552). The tract at residues 562–586 is disordered; the sequence is LKSTQNKGTTSKISNSSEGEAQSEH. Positions 563–581 are enriched in polar residues; it reads KSTQNKGTTSKISNSSEGE. 2 BRCT domains span residues 644 to 734 and 755 to 837; these read SGRG…PFEL and YRGT…NYLL.

Interacts with CDC27 and maybe other components of the APC/C complex. Interacts with histone variant H2AX under DNA damage conditions.

It localises to the cytoplasm. The protein localises to the cytoskeleton. It is found in the microtubule organizing center. The protein resides in the centrosome. Its function is as follows. Implicated in chromosome condensation and DNA damage induced cellular responses. May play a role in neurogenesis and regulation of the size of the cerebral cortex. The chain is Microcephalin from Hylobates lar (Lar gibbon).